The following is a 607-amino-acid chain: UvrABC system protein C (607 aa).

The 78-residue stretch at 29-106 (DKPGVYLMKD…IKKHNPKYNI (78 aa)) folds into the GIY-YIG domain. A UVR domain is found at 211–246 (GAILKALEKKMKEASENLEFERAKEYRDLMEDLKKV).

It belongs to the UvrC family. In terms of assembly, interacts with UvrB in an incision complex.

It is found in the cytoplasm. In terms of biological role, the UvrABC repair system catalyzes the recognition and processing of DNA lesions. UvrC both incises the 5' and 3' sides of the lesion. The N-terminal half is responsible for the 3' incision and the C-terminal half is responsible for the 5' incision. The chain is UvrABC system protein C from Desulfitobacterium hafniense (strain Y51).